The primary structure comprises 334 residues: N-acetyl-gamma-glutamyl-phosphate reductase (334 aa).

Residue Cys-154 is part of the active site.

This sequence belongs to the NAGSA dehydrogenase family. Type 1 subfamily.

The protein resides in the cytoplasm. It catalyses the reaction N-acetyl-L-glutamate 5-semialdehyde + phosphate + NADP(+) = N-acetyl-L-glutamyl 5-phosphate + NADPH + H(+). It functions in the pathway amino-acid biosynthesis; L-arginine biosynthesis; N(2)-acetyl-L-ornithine from L-glutamate: step 3/4. Functionally, catalyzes the NADPH-dependent reduction of N-acetyl-5-glutamyl phosphate to yield N-acetyl-L-glutamate 5-semialdehyde. The chain is N-acetyl-gamma-glutamyl-phosphate reductase from Salmonella typhimurium (strain LT2 / SGSC1412 / ATCC 700720).